A 123-amino-acid polypeptide reads, in one-letter code: Modulator protein MzrA (123 aa).

Over 1 to 8 (MIKRPRWQ) the chain is Cytoplasmic. A helical transmembrane segment spans residues 9 to 29 (YVLLIALALLALATLLVPCMV). Over 30–123 (RTESELRIRA…EFARAPLNLG (94 aa)) the chain is Periplasmic.

This sequence belongs to the MzrA family. Interacts with EnvZ.

The protein localises to the cell inner membrane. Functionally, modulates the activity of the EnvZ/OmpR two-component regulatory system, probably by directly modulating EnvZ enzymatic activity and increasing stability of phosphorylated OmpR. In Serratia proteamaculans (strain 568), this protein is Modulator protein MzrA.